The chain runs to 72 residues: UPF0729 protein C18orf32 homolog (72 aa).

The segment at 1-33 (MVCIPCIVIPVLLWIFKKFLEPYIYPVVSRIWP) is necessary for its localzation to the endoplasmic reticulum and lipid droplets. Residues 36 to 72 (AVQQSGDKNMSKVDCKGAGTNGLPTKGPTEVSDKKKD) are disordered.

Belongs to the UPF0729 family. As to quaternary structure, interacts with DERL1 and AMFR. Post-translationally, undergoes ER-associated degradation (ERAD).

The protein localises to the endoplasmic reticulum. It is found in the lipid droplet. Functionally, may activate the NF-kappa-B signaling pathway. The protein is UPF0729 protein C18orf32 homolog of Mus musculus (Mouse).